Reading from the N-terminus, the 369-residue chain is MQPQDPHEHLKDLDTRLAGIEQVLDLPAMRREAADLERQAADPGLWNDPENAQRVTSRLSFLQAEIRRVEGLRKRLDDVMVLFELAEAENDEPTRTEALAEMAALQKAIDDLEVRTLLSGEYDAREALVTINSQAGGVDAADWAQMLLRMYLRWAERHGYPTEILDTSYAEEAGIKSATFIVHAPFTYGLLAAEHGTHRLVRISPFDNQARRQTSFAGVDVVPVVEKTDHIDIPEDEIRVDVFRSSGPGGQGVNTTDSAVRITHLPTGIVVTCQNERSQLQNRATAMMVLQARLLERRRQEEAAKLAALRGETTTSWGTQIRNYVLHPYQLVKDLRTEVETSNTAGVLDGEIDEFIDAGVRWRRQRERR.

Gln251 is subject to N5-methylglutamine.

Belongs to the prokaryotic/mitochondrial release factor family. Methylated by PrmC. Methylation increases the termination efficiency of RF2.

The protein localises to the cytoplasm. Its function is as follows. Peptide chain release factor 2 directs the termination of translation in response to the peptide chain termination codons UGA and UAA. The chain is Peptide chain release factor 2 from Acidothermus cellulolyticus (strain ATCC 43068 / DSM 8971 / 11B).